Consider the following 95-residue polypeptide: MGSMSVWHWVIVAVVVMLLFGRGKVSELMGDVAKGIKAFKKGMADDETQPNTATSVPPVGPNDPVRTLPHQGAPGTAPQPPHVQPHVPAGDHKAV.

Residues M1 to G21 form a helical membrane-spanning segment. Positions G42–V95 are disordered.

It belongs to the TatA/E family. In terms of assembly, the Tat system comprises two distinct complexes: a TatABC complex, containing multiple copies of TatA, TatB and TatC subunits, and a separate TatA complex, containing only TatA subunits. Substrates initially bind to the TatABC complex, which probably triggers association of the separate TatA complex to form the active translocon.

Its subcellular location is the cell inner membrane. Functionally, part of the twin-arginine translocation (Tat) system that transports large folded proteins containing a characteristic twin-arginine motif in their signal peptide across membranes. TatA could form the protein-conducting channel of the Tat system. This is Sec-independent protein translocase protein TatA from Methylorubrum extorquens (strain PA1) (Methylobacterium extorquens).